We begin with the raw amino-acid sequence, 312 residues long: Aspartate carbamoyltransferase catalytic subunit (312 aa).

Carbamoyl phosphate-binding residues include R62 and T63. Position 90 (K90) interacts with L-aspartate. R112, H140, and Q143 together coordinate carbamoyl phosphate. L-aspartate-binding residues include R173 and R228. The carbamoyl phosphate site is built by G269 and P270.

The protein belongs to the aspartate/ornithine carbamoyltransferase superfamily. ATCase family. Heterododecamer (2C3:3R2) of six catalytic PyrB chains organized as two trimers (C3), and six regulatory PyrI chains organized as three dimers (R2).

The enzyme catalyses carbamoyl phosphate + L-aspartate = N-carbamoyl-L-aspartate + phosphate + H(+). It participates in pyrimidine metabolism; UMP biosynthesis via de novo pathway; (S)-dihydroorotate from bicarbonate: step 2/3. Functionally, catalyzes the condensation of carbamoyl phosphate and aspartate to form carbamoyl aspartate and inorganic phosphate, the committed step in the de novo pyrimidine nucleotide biosynthesis pathway. In Deinococcus geothermalis (strain DSM 11300 / CIP 105573 / AG-3a), this protein is Aspartate carbamoyltransferase catalytic subunit.